A 344-amino-acid polypeptide reads, in one-letter code: uncharacterized protein (344 aa).

The protein belongs to the glycosyltransferase 2 family.

This is an uncharacterized protein from Escherichia coli (strain K12).